The primary structure comprises 323 residues: C-type lectin domain family 11 member A (323 aa).

An N-terminal signal peptide occupies residues 1-21 (MQAAWLLGALVVPQLLGFGHG). Disordered regions lie at residues 55–106 (LGLP…TPED) and 272–295 (LGAQPSASPHPLSPDQPNGGTLEN). The Cell attachment site signature appears at 61–63 (RGD). The segment covering 74 to 90 (EDWEMEEDQGEEEEEEA) has biased composition (acidic residues). The 138-residue stretch at 183-320 (LGHKCFLLSR…CQRRLYYVCE (138 aa)) folds into the C-type lectin domain. Cystine bridges form between C204–C319 and C296–C311.

O-glycosylated. Probably sulfated on the O-glycans. As to expression, expressed in skeletal tissues including bone marrow, chondrocytes, primary ossification center-associated cells, the perichondrium and periosteum. Lower levels of expression were detected in spleen, thymus, appendix and fetal liver.

Its subcellular location is the cytoplasm. The protein localises to the secreted. Functionally, promotes osteogenesis by stimulating the differentiation of mesenchymal progenitors into mature osteoblasts. Important for repair and maintenance of adult bone. The sequence is that of C-type lectin domain family 11 member A (CLEC11A) from Homo sapiens (Human).